The chain runs to 265 residues: MNKSDGNESFALDSLPENIRYPFGKRELEILEKQLDRIVLIYQVDTTYHSALKDIKDQKIISLLVEPSFYGRHHPTSILVVATCNGTYIFDIKALGLIFLELAKILEADQPRKVIHYSHRIADHLLHRQRISLGGIFDTFVAVCLSSNTRIPYTLPEAISLVFGLPMEKVTGGCESQRNFTARPLTHSQMRYLAKLVQLQHIMHDHLNYSHIFCAEVYRISLEFSHSYYGLRSCDVAINMAPASSFGFQLLDSFCKKADKELEQI.

The 3'-5' exonuclease domain maps to Glu-32–Ala-82.

Belongs to the EXD1 family. Homodimer.

Its function is as follows. RNA-binding protein. Inactive exonuclease. This is Protein Exd1 homolog from Drosophila melanogaster (Fruit fly).